A 289-amino-acid chain; its full sequence is ATP synthase gamma chain (289 aa).

Belongs to the ATPase gamma chain family. In terms of assembly, F-type ATPases have 2 components, CF(1) - the catalytic core - and CF(0) - the membrane proton channel. CF(1) has five subunits: alpha(3), beta(3), gamma(1), delta(1), epsilon(1). CF(0) has three main subunits: a, b and c.

The protein resides in the cell inner membrane. Functionally, produces ATP from ADP in the presence of a proton gradient across the membrane. The gamma chain is believed to be important in regulating ATPase activity and the flow of protons through the CF(0) complex. This Acinetobacter baylyi (strain ATCC 33305 / BD413 / ADP1) protein is ATP synthase gamma chain.